The sequence spans 405 residues: Phosphopentomutase (405 aa).

Asp10, Asp303, His308, Asp344, His345, and His356 together coordinate Mn(2+).

It belongs to the phosphopentomutase family. Mn(2+) is required as a cofactor.

It is found in the cytoplasm. The enzyme catalyses 2-deoxy-alpha-D-ribose 1-phosphate = 2-deoxy-D-ribose 5-phosphate. It catalyses the reaction alpha-D-ribose 1-phosphate = D-ribose 5-phosphate. The protein operates within carbohydrate degradation; 2-deoxy-D-ribose 1-phosphate degradation; D-glyceraldehyde 3-phosphate and acetaldehyde from 2-deoxy-alpha-D-ribose 1-phosphate: step 1/2. Isomerase that catalyzes the conversion of deoxy-ribose 1-phosphate (dRib-1-P) and ribose 1-phosphate (Rib-1-P) to deoxy-ribose 5-phosphate (dRib-5-P) and ribose 5-phosphate (Rib-5-P), respectively. This Shewanella pealeana (strain ATCC 700345 / ANG-SQ1) protein is Phosphopentomutase.